The sequence spans 339 residues: Anthranilate phosphoribosyltransferase (339 aa).

5-phospho-alpha-D-ribose 1-diphosphate-binding positions include G79, 82–83, T87, 89–92, 107–115, and S119; these read GD, NIST, and KHGNRAVSS. Residue G79 coordinates anthranilate. S91 contributes to the Mg(2+) binding site. Residue N110 participates in anthranilate binding. R165 contributes to the anthranilate binding site. Mg(2+) is bound by residues D224 and E225.

This sequence belongs to the anthranilate phosphoribosyltransferase family. Homodimer. Mg(2+) serves as cofactor.

It carries out the reaction N-(5-phospho-beta-D-ribosyl)anthranilate + diphosphate = 5-phospho-alpha-D-ribose 1-diphosphate + anthranilate. It participates in amino-acid biosynthesis; L-tryptophan biosynthesis; L-tryptophan from chorismate: step 2/5. Catalyzes the transfer of the phosphoribosyl group of 5-phosphorylribose-1-pyrophosphate (PRPP) to anthranilate to yield N-(5'-phosphoribosyl)-anthranilate (PRA). In Geobacillus sp. (strain WCH70), this protein is Anthranilate phosphoribosyltransferase.